The chain runs to 189 residues: Transmembrane protein 229b (189 aa).

Residues 1-17 (MATTVTPEPLTALSRWY) lie on the Cytoplasmic side of the membrane. The helical transmembrane segment at 18–38 (LYAIHGYFCEVMFTAAWEFVV) threads the bilayer. At 39–43 (NCNWK) the chain is on the extracellular side. The chain crosses the membrane as a helical span at residues 44–64 (FPGVTSVWALFIYGTCILIVE). Topologically, residues 65 to 75 (RMYLCLKDRCN) are cytoplasmic. A helical membrane pass occupies residues 76–96 (VLLRCIIYTLWTYFWEFGTGF). Topologically, residues 97-114 (LLRQFNACPWDYSEFKYN) are extracellular. A helical transmembrane segment spans residues 115-135 (FMGLITAEYAVPWFCASFIVE). The Cytoplasmic portion of the chain corresponds to 136–189 (RLVIRNTLRLRFDEVAESGQAEERLDRGGGGRGGRRGRGARAGATSANGYVKVD). A disordered region spans residues 158-189 (ERLDRGGGGRGGRRGRGARAGATSANGYVKVD).

It belongs to the TMEM229 family.

It localises to the membrane. This Danio rerio (Zebrafish) protein is Transmembrane protein 229b (tmem229b).